Here is a 422-residue protein sequence, read N- to C-terminus: L-cysteine:1D-myo-inositol 2-amino-2-deoxy-alpha-D-glucopyranoside ligase (422 aa).

Cysteine 43 is a Zn(2+) binding site. Residues 43-46 (CGIT), threonine 58, and 81-83 (NVT) each bind L-cysteinyl-5'-AMP. Residues 45–55 (ITPYDATHLGH) carry the 'HIGH' region motif. Positions 185 to 200 (AERGGDPDRPGKRNRL) are enriched in basic and acidic residues. The tract at residues 185 to 221 (AERGGDPDRPGKRNRLDPMLWRGRRPGEPSWPGPRGV) is disordered. Positions 186–191 (ERGGDP) match the 'ERGGDP' region motif. Position 227 (tryptophan 227) interacts with L-cysteinyl-5'-AMP. Cysteine 231 contacts Zn(2+). L-cysteinyl-5'-AMP is bound at residue 249–251 (GSD). Histidine 256 lines the Zn(2+) pocket. Isoleucine 288 lines the L-cysteinyl-5'-AMP pocket. Positions 294 to 298 (KMSKS) match the 'KMSKS' region motif.

It belongs to the class-I aminoacyl-tRNA synthetase family. MshC subfamily. As to quaternary structure, monomer. Requires Zn(2+) as cofactor.

The catalysed reaction is 1D-myo-inositol 2-amino-2-deoxy-alpha-D-glucopyranoside + L-cysteine + ATP = 1D-myo-inositol 2-(L-cysteinylamino)-2-deoxy-alpha-D-glucopyranoside + AMP + diphosphate + H(+). Functionally, catalyzes the ATP-dependent condensation of GlcN-Ins and L-cysteine to form L-Cys-GlcN-Ins. This Geodermatophilus obscurus (strain ATCC 25078 / DSM 43160 / JCM 3152 / CCUG 61914 / KCC A-0152 / KCTC 9177 / NBRC 13315 / NRRL B-3577 / G-20) protein is L-cysteine:1D-myo-inositol 2-amino-2-deoxy-alpha-D-glucopyranoside ligase.